We begin with the raw amino-acid sequence, 130 residues long: 3-aminoacrylate deaminase RutC (130 aa).

This sequence belongs to the RutC family.

It catalyses the reaction (Z)-3-aminoacrylate + H2O + H(+) = 3-oxopropanoate + NH4(+). Its function is as follows. Involved in pyrimidine catabolism. Catalyzes the deamination of 3-aminoacrylate to malonic semialdehyde, a reaction that can also occur spontaneously. RutC may facilitate the reaction and modulate the metabolic fitness, rather than catalyzing essential functions. The polypeptide is 3-aminoacrylate deaminase RutC (Methylorubrum extorquens (strain CM4 / NCIMB 13688) (Methylobacterium extorquens)).